A 683-amino-acid polypeptide reads, in one-letter code: Cysteine-rich receptor-like protein kinase 28 (683 aa).

A signal peptide spans 1–24; sequence MEHVRVIFFFFACVLKIVPFICLA. Topologically, residues 25–288 are extracellular; sequence QKDKYEFPPG…RTGKGKGGSK (264 aa). Gnk2-homologous domains are found at residues 32–136 and 142–251; these read PPGF…NMII and TTPT…TWRF. Asn43, Asn47, Asn73, and Asn153 each carry an N-linked (GlcNAc...) asparagine glycan. Residues 263-283 are disordered; it reads PAIQPADSPTSAARTERTGKG. The helical transmembrane segment at 289-309 threads the bilayer; sequence VIVAIVIPIVFVALFAICLCL. At 310 to 683 the chain is on the cytoplasmic side; the sequence is LLKWKKNKSV…DVTVSELSPR (374 aa). One can recognise a Protein kinase domain in the interval 361–641; that stretch reads FSPENELGRG…ALMLNSYSYT (281 aa). ATP contacts are provided by residues 367 to 375 and Lys389; that span reads LGRGGFGSV. Tyr434 is subject to Phosphotyrosine. Asp486 serves as the catalytic Proton acceptor. Ser490 carries the phosphoserine modification. Thr528 bears the Phosphothreonine mark. Tyr536 is modified (phosphotyrosine).

It belongs to the protein kinase superfamily. Ser/Thr protein kinase family. CRK subfamily.

The protein localises to the membrane. The enzyme catalyses L-seryl-[protein] + ATP = O-phospho-L-seryl-[protein] + ADP + H(+). It catalyses the reaction L-threonyl-[protein] + ATP = O-phospho-L-threonyl-[protein] + ADP + H(+). The polypeptide is Cysteine-rich receptor-like protein kinase 28 (CRK28) (Arabidopsis thaliana (Mouse-ear cress)).